A 263-amino-acid chain; its full sequence is Endonuclease 8 (263 aa).

Pro2 (schiff-base intermediate with DNA) is an active-site residue. Glu3 acts as the Proton donor in catalysis. Catalysis depends on Lys53, which acts as the Proton donor; for beta-elimination activity. Residues Gln70, Arg125, and Asn169 each coordinate DNA. Residues 229–263 form an FPG-type zinc finger; the sequence is KVFHRDGEPCERCGSIIEKTTLSSRPFYWCPGCQH. Arg253 serves as the catalytic Proton donor; for delta-elimination activity.

The protein belongs to the FPG family. Zn(2+) serves as cofactor.

The catalysed reaction is 2'-deoxyribonucleotide-(2'-deoxyribose 5'-phosphate)-2'-deoxyribonucleotide-DNA = a 3'-end 2'-deoxyribonucleotide-(2,3-dehydro-2,3-deoxyribose 5'-phosphate)-DNA + a 5'-end 5'-phospho-2'-deoxyribonucleoside-DNA + H(+). Its function is as follows. Involved in base excision repair of DNA damaged by oxidation or by mutagenic agents. Acts as a DNA glycosylase that recognizes and removes damaged bases. Has a preference for oxidized pyrimidines, such as thymine glycol, 5,6-dihydrouracil and 5,6-dihydrothymine. Has AP (apurinic/apyrimidinic) lyase activity and introduces nicks in the DNA strand. Cleaves the DNA backbone by beta-delta elimination to generate a single-strand break at the site of the removed base with both 3'- and 5'-phosphates. The sequence is that of Endonuclease 8 from Escherichia coli (strain K12 / MC4100 / BW2952).